A 299-amino-acid polypeptide reads, in one-letter code: Phosphoribosylaminoimidazole-succinocarboxamide synthase (299 aa).

Positions 259-279 are disordered; sequence PESGWDRKSEQPPPPLPQHVV.

It belongs to the SAICAR synthetase family.

The enzyme catalyses 5-amino-1-(5-phospho-D-ribosyl)imidazole-4-carboxylate + L-aspartate + ATP = (2S)-2-[5-amino-1-(5-phospho-beta-D-ribosyl)imidazole-4-carboxamido]succinate + ADP + phosphate + 2 H(+). It functions in the pathway purine metabolism; IMP biosynthesis via de novo pathway; 5-amino-1-(5-phospho-D-ribosyl)imidazole-4-carboxamide from 5-amino-1-(5-phospho-D-ribosyl)imidazole-4-carboxylate: step 1/2. In Streptomyces avermitilis (strain ATCC 31267 / DSM 46492 / JCM 5070 / NBRC 14893 / NCIMB 12804 / NRRL 8165 / MA-4680), this protein is Phosphoribosylaminoimidazole-succinocarboxamide synthase.